We begin with the raw amino-acid sequence, 97 residues long: Large ribosomal subunit protein uL23 (97 aa).

It belongs to the universal ribosomal protein uL23 family. As to quaternary structure, part of the 50S ribosomal subunit. Contacts protein L29, and trigger factor when it is bound to the ribosome.

Functionally, one of the early assembly proteins it binds 23S rRNA. One of the proteins that surrounds the polypeptide exit tunnel on the outside of the ribosome. Forms the main docking site for trigger factor binding to the ribosome. This chain is Large ribosomal subunit protein uL23, found in Clostridium perfringens (strain SM101 / Type A).